We begin with the raw amino-acid sequence, 682 residues long: Cyclic nucleotide-gated cation channel (682 aa).

The tract at residues 1 to 41 is disordered; the sequence is MTGQAALERSVSSHRLSVRSRLEGEAERAESAISRTDGDDD. Over 1 to 136 the chain is Cytoplasmic; that stretch reads MTGQAALERS…EGFVVSQSDD (136 aa). Basic and acidic residues predominate over residues 20 to 30; that stretch reads SRLEGEAERAE. Residues 137-157 traverse the membrane as a helical segment; that stretch reads IYYYWLFFIALASLYNWIMLV. At 158-169 the chain is on the extracellular side; that stretch reads ARACFDQLQDEN. A helical membrane pass occupies residues 170–190; sequence FFLWVGLDYLCDVIYILDTCI. Residues 191–218 are Cytoplasmic-facing; the sequence is RLRTGYLEQGLLVKDLAKLRDNYIRTLQ. Residues 219–239 form a helical membrane-spanning segment; sequence FKLDFLSILPTELLFFVTGYV. Residues 240-272 lie on the Extracellular side of the membrane; that stretch reads PQLRFNRLLRFSRMFEFFDRTETRTNYPNAFRI. A helical membrane pass occupies residues 273–293; it reads CNLILYILVIIHWNACIYYAI. The Cytoplasmic segment spans residues 294-311; sequence SKALGLSSDTWVYSGQNK. A helical transmembrane segment spans residues 312-332; that stretch reads TLSFCYVYCFYWSTLTLTTIG. At 333 to 343 the chain is on the extracellular side; sequence EMPPPVKDEEY. The chain crosses the membrane as a helical span at residues 344–364; the sequence is VFVVFDFLVGVLIFATIVGNV. Topologically, residues 365–682 are cytoplasmic; that stretch reads GSMIANMNAT…SAETNSEEET (318 aa). 3',5'-cyclic AMP is bound by residues 455 to 577, glutamate 514, and arginine 529; that span reads LLVE…QGLL. Positions 649–682 are disordered; it reads GEHAGVPTHTHADIHAQPETHTRTSAETNSEEET. Basic and acidic residues predominate over residues 658-672; that stretch reads THADIHAQPETHTRT.

Belongs to the cyclic nucleotide-gated cation channel (TC 1.A.1.5) family. Olfactory neurons.

The protein localises to the membrane. Functionally, this cyclic nucleotide-gated channel is activated equally well by both cAMP and cGMP. This is Cyclic nucleotide-gated cation channel from Ictalurus punctatus (Channel catfish).